The sequence spans 424 residues: Inhibin beta A chain (424 aa).

An N-terminal signal peptide occupies residues 1–20 (MPLLWLRGFLLASCWIIVRS). A propeptide spanning residues 21–308 (SPTPGSGGHS…EEHPHRRRRR (288 aa)) is cleaved from the precursor. The N-linked (GlcNAc...) asparagine glycan is linked to Asn-165. 2 disordered regions span residues 178–197 (QQRR…DVGF) and 259–306 (KKKK…HRRR). A compositionally biased stretch (acidic residues) spans 188–197 (AGEEAEDVGF). The span at 263 to 275 (KEEEAEGRKRDGE) shows a compositional bias: basic and acidic residues. 4 disulfide bridges follow: Cys-312/Cys-320, Cys-319/Cys-389, Cys-348/Cys-421, and Cys-352/Cys-423.

The protein belongs to the TGF-beta family. In terms of assembly, dimeric, linked by one or more disulfide bonds. Inhibin A is a dimer of alpha/INHA and beta-A/INHBA. Activin A is a homodimer of beta-A/INHBA. Activin AB is a dimer of beta-A/INHBA and beta-B/INHBB. Interacts with FST and FSTL3; these interactions prevent activin A interaction to its type II receptor. Activin A interacts with ACVR2A. Activin A interacts with BMPR2. Inhibin A interacts with ACVR1; this interaction creates a non-signaling complex (NSC) that inhibits ACVR1-mediated BMP signaling. Inhibin A interacts with ACVR2A.

It localises to the secreted. In terms of biological role, inhibins/activins are involved in regulating a number of diverse functions such as hypothalamic and pituitary hormone secretion, gonadal hormone secretion, germ cell development and maturation, erythroid differentiation, insulin secretion, nerve cell survival, embryonic axial development or bone growth, depending on their subunit composition. Functionally, activin A is a homodimer of INHBA that plays a role in several essential biological processes including embryonic development, stem cell maintenance and differentiation, haematopoiesis, cell proliferation and tissue fibrosis. Signals through type I (such as ACVR1B or ACVR1C) and type II receptors (such as ACVR2A, ACVR2B or BMPR2) which, upon ligand binding, phosphorylate SMAD2 and SMAD3 intracellular signaling mediators that form a complex with SMAD4, translocate to the nucleus and modulate gene expression. Can also activate alternative non-canonical intracellular signaling pathways including the p38 MAPK, extracellular signal-regulated kinases 1/2 (ERK1/2) and c-Jun N-terminal kinases (JNKs) to modulate cell migration and differentiation. Alternatively, promotes osteoblastic differentiation via ACVRL1-SMAD1/5/9 pathway. In addition, can engage the type I receptor ACVR1 to form an ACVR1-activin A-type II receptor non-signaling complex (NSC) that renders receptors unavailable for engagement with BMPs, hence resulting in an apparent inhibition of ACVR1-mediated BMP signaling. Its function is as follows. Inhibin A is a dimer of alpha/INHA and beta-A/INHBA that functions as a feedback regulator in the hypothalamic-pituitary-gonadal (HPG) axis. Inhibits the secretion of FSH from the anterior pituitary gland by acting on pituitary gonadotrope cells. Antagonizes activin A by binding to the proteoglycan, betaglycan, and forming a stable complex with and, thereby, sequestering type II activin receptors while excluding type I receptor. The polypeptide is Inhibin beta A chain (INHBA) (Sus scrofa (Pig)).